We begin with the raw amino-acid sequence, 66 residues long: Large ribosomal subunit protein bL35 (66 aa).

Belongs to the bacterial ribosomal protein bL35 family.

The sequence is that of Large ribosomal subunit protein bL35 from Leptospira biflexa serovar Patoc (strain Patoc 1 / Ames).